A 296-amino-acid chain; its full sequence is Ribosomal RNA small subunit methyltransferase H (296 aa).

Residues 41–43, D60, F87, D103, and Q110 contribute to the S-adenosyl-L-methionine site; that span reads GGH.

This sequence belongs to the methyltransferase superfamily. RsmH family.

It localises to the cytoplasm. It carries out the reaction cytidine(1402) in 16S rRNA + S-adenosyl-L-methionine = N(4)-methylcytidine(1402) in 16S rRNA + S-adenosyl-L-homocysteine + H(+). Functionally, specifically methylates the N4 position of cytidine in position 1402 (C1402) of 16S rRNA. The sequence is that of Ribosomal RNA small subunit methyltransferase H from Synechococcus elongatus (strain ATCC 33912 / PCC 7942 / FACHB-805) (Anacystis nidulans R2).